An 898-amino-acid chain; its full sequence is Metalloprotease StcE (898 aa).

Residues 1–35 (MNTKMNERWRTPMKLKYLSCTILAPLAIGVFSATA) form the signal peptide. Positions 296–551 (ELLLHTIDIG…QRFFENKAVF (256 aa)) constitute a Peptidase M66 domain. Histidine 446 lines the Zn(2+) pocket. Glutamate 447 is an active-site residue. Zn(2+)-binding residues include histidine 450 and histidine 456.

Zn(2+) serves as cofactor.

The protein localises to the secreted. Its activity is regulated as follows. Inhibited by divalent cation chelators such as BPS and EDTA. Functionally, virulence factor that contributes to intimate adherence of enterohemorrhagic E.coli (EHEC) O157:H7 to host cells. Is able to cleave the secreted human mucin 7 (MUC7) and the glycoprotein 340 (DMBT1/GP340). Also cleaves human C1 inhibitor (SERPING1), a regulator of multiple inflammatory pathways, and binds and localizes it to bacterial and host cell surfaces, protecting them from complement-mediated lysis. Therefore, the current model proposes two roles for StcE during infection: it acts first as a mucinase, allowing passage of EHEC through the oral cavity by cleaving the salivary glycoproteins that are responsible for bacterial aggregation. Similarly, in the colon, StcE cleaves the glycoproteins that protect the intestinal epithelial surface, allowing EHEC to come into close contact with host cell membranes. Secondly, it acts as an anti-inflammatory agent by localizing SERPING1 to cell membranes. This is Metalloprotease StcE (stcE) from Escherichia coli O157:H7.